A 365-amino-acid polypeptide reads, in one-letter code: Heme A synthase (365 aa).

5 helical membrane-spanning segments follow: residues 23 to 43 (LLRI…LVGG), 109 to 129 (LLAR…WLTG), 137 to 157 (LPLV…WWMV), 172 to 192 (LATH…ILRG), and 208 to 228 (GFAA…ALVA). H272 contacts heme. A run of 3 helical transmembrane segments spans residues 274-294 (LGAY…ARAL), 303-323 (AVLF…TLLM), and 327-347 (IHVA…SVAH). Residue H333 participates in heme binding.

The protein belongs to the COX15/CtaA family. Type 2 subfamily. Interacts with CtaB. Heme b is required as a cofactor.

The protein resides in the cell membrane. It carries out the reaction Fe(II)-heme o + 2 A + H2O = Fe(II)-heme a + 2 AH2. The protein operates within porphyrin-containing compound metabolism; heme A biosynthesis; heme A from heme O: step 1/1. Catalyzes the conversion of heme O to heme A by two successive hydroxylations of the methyl group at C8. The first hydroxylation forms heme I, the second hydroxylation results in an unstable dihydroxymethyl group, which spontaneously dehydrates, resulting in the formyl group of heme A. This Agrobacterium fabrum (strain C58 / ATCC 33970) (Agrobacterium tumefaciens (strain C58)) protein is Heme A synthase.